Consider the following 758-residue polypeptide: Vitamin K-dependent gamma-carboxylase (758 aa).

The interval 1–34 (MAVSARPARAPRGPDKVKKDKAAQTSGPRQGSQM) is disordered. The residue at position 2 (A2) is an N-acetylalanine. Residues 2–60 (AVSARPARAPRGPDKVKKDKAAQTSGPRQGSQMGKLLGFEWTDVSSWERLVTLLNRPTD) lie on the Cytoplasmic side of the membrane. Over residues 12-22 (RGPDKVKKDKA) the composition is skewed to basic and acidic residues. A compositionally biased stretch (polar residues) spans 23–33 (AQTSGPRQGSQ). The helical transmembrane segment at 61–81 (PASLAVFRFLFGLMMVLDIPQ) threads the bilayer. Over 82–113 (ERGLSSLDRRYLDGLEVCRFPLLDALQPLPLD) the chain is Lumenal. An intrachain disulfide couples C99 to C450. The chain crosses the membrane as a helical span at residues 114–134 (WMYLVYTIMFLGALGMMLGLC). At 135–136 (YR) the chain is on the cytoplasmic side. Residues 137 to 157 (ISCVLFLLPYWYVFLLDKTSW) form a helical membrane-spanning segment. The Lumenal segment spans residues 158–292 (NNHSYLYGLL…VSYFHCMNSQ (135 aa)). The chain crosses the membrane as a helical span at residues 293–313 (LFSIGMFPYVMLASSPLFCSP). Residues 314–361 (EWPRKLVAHCPKKLQELLPLRTAPQPSTSCMYKRSRARGSQKPGLRHQ) are Cytoplasmic-facing. The chain crosses the membrane as a helical span at residues 362–382 (LSTAFTLLYLLEQLFLPYSHF). Residues 383–758 (LTQGYNNWTN…PDSHPVHSEF (376 aa)) are Lumenal-facing. The segment at 726 to 758 (RPFEPAGEPSPVNTDSSNPNPPEPDSHPVHSEF) is disordered. The segment covering 749–758 (PDSHPVHSEF) has biased composition (basic and acidic residues).

It belongs to the vitamin K-dependent gamma-carboxylase family. Monomer. May interact with CALU.

It is found in the endoplasmic reticulum membrane. It carries out the reaction 4-carboxy-L-glutamyl-[protein] + 2,3-epoxyphylloquinone + H2O + H(+) = phylloquinol + L-glutamyl-[protein] + CO2 + O2. Its function is as follows. Mediates the vitamin K-dependent carboxylation of glutamate residues to calcium-binding gamma-carboxyglutamate (Gla) residues with the concomitant conversion of the reduced hydroquinone form of vitamin K to vitamin K epoxide. Catalyzes gamma-carboxylation of various proteins, such as blood coagulation factors (F2, F7, F9 and F10), osteocalcin (BGLAP) or matrix Gla protein (MGP). This is Vitamin K-dependent gamma-carboxylase (GGCX) from Ovis aries (Sheep).